Here is a 142-residue protein sequence, read N- to C-terminus: Transcriptional regulator MraZ (142 aa).

2 consecutive SpoVT-AbrB domains span residues 5–51 (ASAL…PRPE) and 77–120 (AMDV…DSQT).

The protein belongs to the MraZ family. Forms oligomers.

Its subcellular location is the cytoplasm. The protein localises to the nucleoid. The protein is Transcriptional regulator MraZ of Burkholderia multivorans (strain ATCC 17616 / 249).